A 236-amino-acid polypeptide reads, in one-letter code: Factor V activator RVV-V alpha (236 aa).

A Peptidase S1 domain is found at 1–227 (VVGGDECNIN…YNNWIQNIIA (227 aa)). 6 disulfides stabilise this stretch: Cys-7/Cys-141, Cys-28/Cys-44, Cys-76/Cys-234, Cys-120/Cys-188, Cys-152/Cys-167, and Cys-178/Cys-203. Active-site charge relay system residues include His-43 and Asp-88. The Charge relay system role is filled by Ser-182. Asn-229 carries an N-linked (GlcNAc...) asparagine glycan.

This sequence belongs to the peptidase S1 family. Snake venom subfamily. As to quaternary structure, monomer. In terms of tissue distribution, expressed by the venom gland.

It is found in the secreted. The enzyme catalyses Fully activates human clotting factor V by a single cleavage at the 1545-Trp-Tyr-Leu-Arg-|-Ser-Asn-Asn-Gly-1552 bond. Cattle, but not rabbit, factor V is cleaved, and no other proteins of the clotting system are attacked. Esterase activity is observed on Bz-Arg-OEt and Tos-Arg-OMe, and amidase activity on Phe-pipecolyl-Arg-NHPhNO2.. Inhibited by D-Phe-Pro-Arg-chloromethyl ketone (FPRCK) (97%), PMSF (76%), and benzamidine (50%). Is not inhibited by BPTI, antithrombin and EDTA. Venom serine protease that activates factor V (F5) in a calcium-independent manner. It cleaves the Arg(1545)-Ser(1546) linkage in the human factor V molecule. Induces the coagulation of mammalian plasma. This chain is Factor V activator RVV-V alpha, found in Daboia siamensis (Eastern Russel's viper).